A 123-amino-acid chain; its full sequence is Large ribosomal subunit protein uL22c (123 aa).

Belongs to the universal ribosomal protein uL22 family. In terms of assembly, part of the 50S ribosomal subunit.

It localises to the plastid. The protein resides in the chloroplast. This protein binds specifically to 23S rRNA. Its function is as follows. The globular domain of the protein is located near the polypeptide exit tunnel on the outside of the subunit, while an extended beta-hairpin is found that lines the wall of the exit tunnel in the center of the 70S ribosome. This Illicium oligandrum (Star anise) protein is Large ribosomal subunit protein uL22c (rpl22).